The chain runs to 232 residues: Large ribosomal subunit protein uL1 (232 aa).

Belongs to the universal ribosomal protein uL1 family. Part of the 50S ribosomal subunit.

Its function is as follows. Binds directly to 23S rRNA. The L1 stalk is quite mobile in the ribosome, and is involved in E site tRNA release. In terms of biological role, protein L1 is also a translational repressor protein, it controls the translation of the L11 operon by binding to its mRNA. The protein is Large ribosomal subunit protein uL1 of Cereibacter sphaeroides (strain ATCC 17029 / ATH 2.4.9) (Rhodobacter sphaeroides).